A 230-amino-acid chain; its full sequence is Ribose-5-phosphate isomerase A (230 aa).

Residues 29–32 (TGST), 85–88 (DGAD), and 98–101 (KGGG) each bind substrate. E107 serves as the catalytic Proton acceptor. K125 serves as a coordination point for substrate.

This sequence belongs to the ribose 5-phosphate isomerase family. In terms of assembly, homodimer.

It catalyses the reaction aldehydo-D-ribose 5-phosphate = D-ribulose 5-phosphate. It functions in the pathway carbohydrate degradation; pentose phosphate pathway; D-ribose 5-phosphate from D-ribulose 5-phosphate (non-oxidative stage): step 1/1. Functionally, catalyzes the reversible conversion of ribose-5-phosphate to ribulose 5-phosphate. This is Ribose-5-phosphate isomerase A from Staphylococcus haemolyticus (strain JCSC1435).